Here is a 289-residue protein sequence, read N- to C-terminus: Probable WRKY transcription factor 38 (289 aa).

The interval 62–103 is disordered; sequence PETEDDQFSDLSSRDSSPPPQGSPSKKRKIDSTNSSENWRDD. A DNA-binding region (WRKY) is located at residues 104 to 172; the sequence is SPDPIYYDGY…YFGHHTCKTE (69 aa). The span at 249 to 266 shows a compositional bias: low complexity; sequence LSSPSGSYPPSSSSGSES. The disordered stretch occupies residues 249 to 278; that stretch reads LSSPSGSYPPSSSSGSESADFNSDLLFDNP.

Belongs to the WRKY group III family.

It is found in the nucleus. Functionally, transcription factor. Interacts specifically with the W box (5'-(T)TGAC[CT]-3'), a frequently occurring elicitor-responsive cis-acting element. The protein is Probable WRKY transcription factor 38 (WRKY38) of Arabidopsis thaliana (Mouse-ear cress).